A 341-amino-acid polypeptide reads, in one-letter code: Anthranilate phosphoribosyltransferase (341 aa).

Residues Gly-80, 83-84 (GD), Thr-88, 90-93 (NIST), 108-116 (KHGNRAVSS), and Ser-120 each bind 5-phospho-alpha-D-ribose 1-diphosphate. Gly-80 is a binding site for anthranilate. Ser-92 provides a ligand contact to Mg(2+). Asn-111 is an anthranilate binding site. Arg-166 contributes to the anthranilate binding site. Mg(2+)-binding residues include Asp-225 and Glu-226.

Belongs to the anthranilate phosphoribosyltransferase family. As to quaternary structure, homodimer. Requires Mg(2+) as cofactor.

The enzyme catalyses N-(5-phospho-beta-D-ribosyl)anthranilate + diphosphate = 5-phospho-alpha-D-ribose 1-diphosphate + anthranilate. Its pathway is amino-acid biosynthesis; L-tryptophan biosynthesis; L-tryptophan from chorismate: step 2/5. Functionally, catalyzes the transfer of the phosphoribosyl group of 5-phosphorylribose-1-pyrophosphate (PRPP) to anthranilate to yield N-(5'-phosphoribosyl)-anthranilate (PRA). The polypeptide is Anthranilate phosphoribosyltransferase (Brevibacillus brevis (strain 47 / JCM 6285 / NBRC 100599)).